The chain runs to 31 residues: Cytochrome b6-f complex subunit 6 (31 aa).

The chain crosses the membrane as a helical span at residues 4-24 (LTSYFGFLLAALTITFVLFIG).

This sequence belongs to the PetL family. In terms of assembly, the 4 large subunits of the cytochrome b6-f complex are cytochrome b6, subunit IV (17 kDa polypeptide, PetD), cytochrome f and the Rieske protein, while the 4 small subunits are PetG, PetL, PetM and PetN. The complex functions as a dimer.

The protein localises to the plastid. The protein resides in the chloroplast thylakoid membrane. Component of the cytochrome b6-f complex, which mediates electron transfer between photosystem II (PSII) and photosystem I (PSI), cyclic electron flow around PSI, and state transitions. PetL is important for photoautotrophic growth as well as for electron transfer efficiency and stability of the cytochrome b6-f complex. The protein is Cytochrome b6-f complex subunit 6 of Oxybasis rubra (Red goosefoot).